A 938-amino-acid polypeptide reads, in one-letter code: Kinesin-like protein KIN-7B (938 aa).

One can recognise a Kinesin motor domain in the interval 29–348 (KILVTVRMRP…LSFAMSAKEV (320 aa)). 113–120 (GQTSSGKT) is an ATP binding site. The stretch at 357–431 (VVSEKKLLKH…DLERKAKERK (75 aa)) forms a coiled coil. The tract at residues 450–481 (TKEESIPSKSVPSSRRTARDRRKDNVRQSLTS) is disordered. Residues 555-590 (KANLKEEINRLNSQEIAALEKKLECVQNTIDMLVSS) adopt a coiled-coil conformation. Residues 628–678 (CSPLSGTENKDPESNVVSANSAPVSFGATPPKRDDNRCRTQSREGTPVSRQ) form a disordered region. Residues 641–652 (SNVVSANSAPVS) show a composition bias toward low complexity. The span at 658 to 669 (PKRDDNRCRTQS) shows a compositional bias: basic and acidic residues.

This sequence belongs to the TRAFAC class myosin-kinesin ATPase superfamily. Kinesin family. KIN-7 subfamily. As to quaternary structure, interacts with ANP3. Interacts with TIO/FU. Expressed in roots, stems, flowers, pollen mother cells and embryos.

Its subcellular location is the cytoplasm. The protein resides in the cytoskeleton. It is found in the phragmoplast. Probable plus end-directed motor protein that functions in the NACK-PQR (ANP3-MKK6-MPK4) MAP kinase signaling pathway, which is essential for somatic cell cytokinesis, especially for the cell-plate formation and its expansion. May regulate the activity and the localization of ANP3, probably by association through the non-catalytic region of the kinase. Functionally redundant with NACK1 and essential to promote the progression of cytokinesis and for cellularization (formation of the cell plate) during microgametogenesis and megagametogenesis. This is Kinesin-like protein KIN-7B from Arabidopsis thaliana (Mouse-ear cress).